A 322-amino-acid chain; its full sequence is Phosphatidylserine decarboxylase proenzyme (322 aa).

Catalysis depends on charge relay system; for autoendoproteolytic cleavage activity residues Asp90, His147, and Ser254. Residue Ser254 is the Schiff-base intermediate with substrate; via pyruvic acid; for decarboxylase activity of the active site. Residue Ser254 is modified to Pyruvic acid (Ser); by autocatalysis. A disordered region spans residues Glu294–Ser322. Basic and acidic residues predominate over residues Asn306–Ser322.

Belongs to the phosphatidylserine decarboxylase family. PSD-B subfamily. Prokaryotic type I sub-subfamily. As to quaternary structure, heterodimer of a large membrane-associated beta subunit and a small pyruvoyl-containing alpha subunit. Pyruvate is required as a cofactor. Post-translationally, is synthesized initially as an inactive proenzyme. Formation of the active enzyme involves a self-maturation process in which the active site pyruvoyl group is generated from an internal serine residue via an autocatalytic post-translational modification. Two non-identical subunits are generated from the proenzyme in this reaction, and the pyruvate is formed at the N-terminus of the alpha chain, which is derived from the carboxyl end of the proenzyme. The autoendoproteolytic cleavage occurs by a canonical serine protease mechanism, in which the side chain hydroxyl group of the serine supplies its oxygen atom to form the C-terminus of the beta chain, while the remainder of the serine residue undergoes an oxidative deamination to produce ammonia and the pyruvoyl prosthetic group on the alpha chain. During this reaction, the Ser that is part of the protease active site of the proenzyme becomes the pyruvoyl prosthetic group, which constitutes an essential element of the active site of the mature decarboxylase.

It is found in the cell membrane. It catalyses the reaction a 1,2-diacyl-sn-glycero-3-phospho-L-serine + H(+) = a 1,2-diacyl-sn-glycero-3-phosphoethanolamine + CO2. It functions in the pathway phospholipid metabolism; phosphatidylethanolamine biosynthesis; phosphatidylethanolamine from CDP-diacylglycerol: step 2/2. In terms of biological role, catalyzes the formation of phosphatidylethanolamine (PtdEtn) from phosphatidylserine (PtdSer). This is Phosphatidylserine decarboxylase proenzyme from Citrobacter koseri (strain ATCC BAA-895 / CDC 4225-83 / SGSC4696).